A 934-amino-acid chain; its full sequence is Serine/threonine-protein kinase PknD (934 aa).

Residues 4–296 (YELIRLIGKG…ELRQALQPYL (293 aa)) form the Protein kinase domain. Residues 10–18 (IGKGGMGEV) and Lys33 each bind ATP. The active-site Proton acceptor is Asp138.

The protein belongs to the protein kinase superfamily. Ser/Thr protein kinase family. In terms of assembly, interacts with Pkn1. Post-translationally, autophosphorylated on serine and threonine residues. Present in elementary bodies 40 hours post-infection as 2 bands of approximately 55 to 60 and 45 to 50 kDa, which may be due to differential phosphorylation as well as degradation; an enzymatically active full-length protein can also be detected.

It carries out the reaction L-seryl-[protein] + ATP = O-phospho-L-seryl-[protein] + ADP + H(+). The catalysed reaction is L-threonyl-[protein] + ATP = O-phospho-L-threonyl-[protein] + ADP + H(+). Functionally, together with the serine/threonine kinase Pkn1, may play a role in the specific interactions with host proteins during intracellular growth. Autophosphorylates and also phosphorylates Pkn1. The chain is Serine/threonine-protein kinase PknD from Chlamydia trachomatis serovar L2 (strain ATCC VR-902B / DSM 19102 / 434/Bu).